The chain runs to 465 residues: 5'-adenylylsulfate reductase 1, chloroplastic (465 aa).

The N-terminal 53 residues, 1–53, are a transit peptide targeting the chloroplast; sequence MAMSVNVSSSSSSGIINSRFGVSLEPKVSQIGSLRLLDRVHVAPVSLNLSGKR. The interval 73 to 327 is reductase domain; that stretch reads LAATMVAEIA…KAKECGLHKG (255 aa). Residues 344 to 465 form the Thioredoxin domain; it reads SAVADIFKSE…SLTSFLNLVR (122 aa). Catalysis depends on nucleophile residues C385 and C388. An intrachain disulfide couples C385 to C388.

Belongs to the APS reductase family. [4Fe-4S] cluster is required as a cofactor. Leaves, roots and stem.

The protein resides in the plastid. Its subcellular location is the chloroplast. The enzyme catalyses glutathione disulfide + sulfite + AMP + 2 H(+) = adenosine 5'-phosphosulfate + 2 glutathione. Stimulated by sodium sulfate &gt; ammonium sulfate and is sensitive to inactivation by 5'AMP. Reduces sulfate for Cys biosynthesis. Substrate preference is adenosine-5'-phosphosulfate (APS) &gt;&gt; 3'-phosphoadenosine-5'-phosphosulfate (PAPS). Uses glutathione or DTT as source of protons. In Arabidopsis thaliana (Mouse-ear cress), this protein is 5'-adenylylsulfate reductase 1, chloroplastic (APR1).